The sequence spans 458 residues: Transmembrane protein adipocyte-associated 1 homolog (458 aa).

N21 and N45 each carry an N-linked (GlcNAc...) asparagine glycan. Transmembrane regions (helical) follow at residues 81–101, 114–134, 152–172, 181–201, 225–245, 263–283, and 291–311; these read VILVPNILFLLFLILKCGSVI, AFTLLVYVSTLVNIIRCAYSM, IIIKFFYLTAEFCALTFGLLF, ILIALLGTLLVSIPHTAVQVI, FLFWVFSSAVLALVYFFIMCL, LIYCMMMVVLNVLQSMGAALI, and LCFVGVSTYVYFVLYPPIIYF. N-linked (GlcNAc...) asparagine glycans are attached at residues N323 and N324. The disordered stretch occupies residues 409 to 458; it reads RTGSDDYAHHRDSMLSEPSTGTTTRHLKGLGPQGSLVFEDDPSSLTSLRM. The segment covering 411 to 422 has biased composition (basic and acidic residues); sequence GSDDYAHHRDSM.

Belongs to the UPF0359 family.

The protein resides in the membrane. This chain is Transmembrane protein adipocyte-associated 1 homolog (tpra-1), found in Caenorhabditis elegans.